The chain runs to 206 residues: Large ribosomal subunit protein uL4 (206 aa).

A disordered region spans residues 62–85 (KPWRQKGTGRARQGSTRSPQFRGG).

The protein belongs to the universal ribosomal protein uL4 family. In terms of assembly, part of the 50S ribosomal subunit.

In terms of biological role, one of the primary rRNA binding proteins, this protein initially binds near the 5'-end of the 23S rRNA. It is important during the early stages of 50S assembly. It makes multiple contacts with different domains of the 23S rRNA in the assembled 50S subunit and ribosome. Functionally, forms part of the polypeptide exit tunnel. The sequence is that of Large ribosomal subunit protein uL4 from Rhodospirillum centenum (strain ATCC 51521 / SW).